We begin with the raw amino-acid sequence, 482 residues long: tRNA sulfurtransferase (482 aa).

The THUMP domain maps to 61–165 (LAIRDALTRI…DDRLLLIKGR (105 aa)). ATP-binding positions include 183 to 184 (LI), lysine 265, glycine 287, and glutamine 296. Cysteine 344 and cysteine 456 are oxidised to a cystine. The Rhodanese domain occupies 404 to 482 (FGPNDVILDI…GFENVKVYRP (79 aa)). Cysteine 456 serves as the catalytic Cysteine persulfide intermediate.

Belongs to the ThiI family.

The protein resides in the cytoplasm. It catalyses the reaction [ThiI sulfur-carrier protein]-S-sulfanyl-L-cysteine + a uridine in tRNA + 2 reduced [2Fe-2S]-[ferredoxin] + ATP + H(+) = [ThiI sulfur-carrier protein]-L-cysteine + a 4-thiouridine in tRNA + 2 oxidized [2Fe-2S]-[ferredoxin] + AMP + diphosphate. The enzyme catalyses [ThiS sulfur-carrier protein]-C-terminal Gly-Gly-AMP + S-sulfanyl-L-cysteinyl-[cysteine desulfurase] + AH2 = [ThiS sulfur-carrier protein]-C-terminal-Gly-aminoethanethioate + L-cysteinyl-[cysteine desulfurase] + A + AMP + 2 H(+). Its pathway is cofactor biosynthesis; thiamine diphosphate biosynthesis. Its function is as follows. Catalyzes the ATP-dependent transfer of a sulfur to tRNA to produce 4-thiouridine in position 8 of tRNAs, which functions as a near-UV photosensor. Also catalyzes the transfer of sulfur to the sulfur carrier protein ThiS, forming ThiS-thiocarboxylate. This is a step in the synthesis of thiazole, in the thiamine biosynthesis pathway. The sulfur is donated as persulfide by IscS. This is tRNA sulfurtransferase from Salmonella enteritidis PT4 (strain P125109).